We begin with the raw amino-acid sequence, 117 residues long: Immunoglobulin kappa variable 1-17 (117 aa).

Positions 1–22 are cleaved as a signal peptide; the sequence is MDMRVPAQLLGLLLLWFPGARC. Residues 23 to 45 are framework-1; sequence DIQMTQSPSSLSASVGDRVTITC. An Ig-like domain is found at 24-117; the sequence is IQMTQSPSSL…YYCLQHNSYP (94 aa). Cys45 and Cys110 are disulfide-bonded. Positions 46-56 are complementarity-determining-1; the sequence is RASQGIRNDLG. Positions 57-71 are framework-2; it reads WYQQKPGKAPKRLIY. Residues 72-78 are complementarity-determining-2; that stretch reads AASSLQS. The framework-3 stretch occupies residues 79–110; the sequence is GVPSRFSGSGSGTEFTLTISSLQPEDFATYYC. The segment at 111-117 is complementarity-determining-3; it reads LQHNSYP.

Immunoglobulins are composed of two identical heavy chains and two identical light chains; disulfide-linked.

The protein resides in the secreted. It localises to the cell membrane. In terms of biological role, v region of the variable domain of immunoglobulin light chains that participates in the antigen recognition. Immunoglobulins, also known as antibodies, are membrane-bound or secreted glycoproteins produced by B lymphocytes. In the recognition phase of humoral immunity, the membrane-bound immunoglobulins serve as receptors which, upon binding of a specific antigen, trigger the clonal expansion and differentiation of B lymphocytes into immunoglobulins-secreting plasma cells. Secreted immunoglobulins mediate the effector phase of humoral immunity, which results in the elimination of bound antigens. The antigen binding site is formed by the variable domain of one heavy chain, together with that of its associated light chain. Thus, each immunoglobulin has two antigen binding sites with remarkable affinity for a particular antigen. The variable domains are assembled by a process called V-(D)-J rearrangement and can then be subjected to somatic hypermutations which, after exposure to antigen and selection, allow affinity maturation for a particular antigen. This Homo sapiens (Human) protein is Immunoglobulin kappa variable 1-17.